Here is a 485-residue protein sequence, read N- to C-terminus: Glutathione gamma-glutamylcysteinyltransferase 1 (485 aa).

The Peptidase C83 domain occupies 1–221; it reads MAMASLYRRS…GFMLISRPHR (221 aa). Catalysis depends on residues Cys56, His162, and Asp180.

The protein belongs to the phytochelatin synthase family. As to expression, expressed in roots and shoots.

It carries out the reaction [Glu(-Cys)](n)-Gly + glutathione + H(+) = [Glu(-Cys)](n+1)-Gly + glycine. With respect to regulation, requires cadmium for activity. Also activated in vitro or in heterologous system by Ag(+), Hg(+), Zn(2+), Cu(2+), Fe(2+) or Fe(3+) ions, but not by Co(2+) or Ni(2+) ions. In terms of biological role, involved in the synthesis of phytochelatins (PC) and homophytochelatins (hPC), the heavy-metal-binding peptides of plants. Also involved in glutathione-conjugates degradation. This chain is Glutathione gamma-glutamylcysteinyltransferase 1 (PCS1), found in Arabidopsis thaliana (Mouse-ear cress).